We begin with the raw amino-acid sequence, 282 residues long: Predicted GPI-anchored protein 23 (282 aa).

Residues 1 to 18 (MRVSTLVLSTSIIPIATA) form the signal peptide. The segment at 163–264 (GQETSGAGSL…SSNSSSSAGM (102 aa)) is disordered. Residues N180, N192, and N257 are each glycosylated (N-linked (GlcNAc...) asparagine). Residues 186–216 (GGSGSSNGTSSGSGSGSGAGVGSGSGSGSGS) show a composition bias toward gly residues. The segment covering 236-264 (LGISSSISQSTTRQLQTSGSSNSSSSAGM) has biased composition (low complexity). S259 carries the GPI-anchor amidated serine lipid modification. Residues 260–282 (SSAGMGNVVVGMNAVALAALVLI) constitute a propeptide, removed in mature form.

The protein localises to the cell membrane. Functionally, probable cell surface protein involved in the process of adhesion and early events of invasion. The polypeptide is Predicted GPI-anchored protein 23 (PGA23) (Candida albicans (strain SC5314 / ATCC MYA-2876) (Yeast)).